The chain runs to 324 residues: tRNA pseudouridine synthase B (324 aa).

Residue Asp-49 is the Nucleophile of the active site.

It belongs to the pseudouridine synthase TruB family. Type 1 subfamily.

The enzyme catalyses uridine(55) in tRNA = pseudouridine(55) in tRNA. Functionally, responsible for synthesis of pseudouridine from uracil-55 in the psi GC loop of transfer RNAs. This Brucella anthropi (strain ATCC 49188 / DSM 6882 / CCUG 24695 / JCM 21032 / LMG 3331 / NBRC 15819 / NCTC 12168 / Alc 37) (Ochrobactrum anthropi) protein is tRNA pseudouridine synthase B.